The following is a 1371-amino-acid chain: Probable serine/threonine-protein kinase DDB_G0293292 (1371 aa).

Protein kinase domains lie at 9 to 269 and 1131 to 1371; these read NKIL…HPNT and FKEV…QPTL. Residues 15-23 and lysine 39 each bind ATP; that span reads IDDGNTKRK. Residue aspartate 143 is the Proton acceptor of the active site.

It belongs to the protein kinase superfamily. Ser/Thr protein kinase family.

The catalysed reaction is L-seryl-[protein] + ATP = O-phospho-L-seryl-[protein] + ADP + H(+). It carries out the reaction L-threonyl-[protein] + ATP = O-phospho-L-threonyl-[protein] + ADP + H(+). The chain is Probable serine/threonine-protein kinase DDB_G0293292 from Dictyostelium discoideum (Social amoeba).